The sequence spans 212 residues: Pyridoxine/pyridoxamine 5'-phosphate oxidase (212 aa).

FMN contacts are provided by residues 59 to 64, 74 to 75, Lys81, and Gln103; these read RMVLMK and YS. A substrate-binding site is contributed by Lys64. Residues Tyr121 and Arg125 each contribute to the substrate site. FMN contacts are provided by residues 138-139 and Trp183; that span reads QS. A substrate-binding site is contributed by 189-191; the sequence is RLH. Arg193 contributes to the FMN binding site.

It belongs to the pyridoxamine 5'-phosphate oxidase family. Homodimer. FMN serves as cofactor.

It catalyses the reaction pyridoxamine 5'-phosphate + O2 + H2O = pyridoxal 5'-phosphate + H2O2 + NH4(+). The enzyme catalyses pyridoxine 5'-phosphate + O2 = pyridoxal 5'-phosphate + H2O2. Its pathway is cofactor metabolism; pyridoxal 5'-phosphate salvage; pyridoxal 5'-phosphate from pyridoxamine 5'-phosphate: step 1/1. The protein operates within cofactor metabolism; pyridoxal 5'-phosphate salvage; pyridoxal 5'-phosphate from pyridoxine 5'-phosphate: step 1/1. Catalyzes the oxidation of either pyridoxine 5'-phosphate (PNP) or pyridoxamine 5'-phosphate (PMP) into pyridoxal 5'-phosphate (PLP). The protein is Pyridoxine/pyridoxamine 5'-phosphate oxidase of Rhodopseudomonas palustris (strain BisB5).